Reading from the N-terminus, the 141-residue chain is HTH-type transcriptional regulator ZntR (141 aa).

Positions 1 to 70 (MYRIGELAKM…LESIRELLSI (70 aa)) constitute an HTH merR-type domain. The H-T-H motif DNA-binding region spans 4–23 (IGELAKMAEVTPDTIRYYEK). Positions 114, 115, 119, and 124 each coordinate Zn(2+).

In terms of assembly, homodimer.

In terms of biological role, zinc-responsive transcriptional regulator of zntA. This chain is HTH-type transcriptional regulator ZntR (zntR), found in Escherichia coli O157:H7.